The sequence spans 1872 residues: Histone acetyltransferase KAT6B (1872 aa).

An SAMD1-like winged helix (WH) domain is found at 1–77; it reads MVKLANPLYT…LASYKDPDNP (77 aa). Disordered stretches follow at residues 70–103 and 168–207; these read SYKD…CNDL and KEGP…HEKD. Residues 104–177 enclose the H15 domain; it reads RNVDWNKLLK…KEGPQYRVNS (74 aa). Positions 189 to 202 are enriched in low complexity; sequence PSAFPSSLPPVSLL. 2 consecutive PHD-type zinc fingers follow at residues 214–273 and 270–321; these read IPIC…CKTC and CKTC…CRPK. Ser356 carries the phosphoserine modification. The disordered stretch occupies residues 361-417; it reads EGSMSAFTGRGSPGRGQKTKVSTTPSSGHAASGKHSSSRLAVTDPTRPGATTKTTTS. The tract at residues 362 to 535 is negatively regulates HAT activity; that stretch reads GSMSAFTGRG…ECESGVEDCG (174 aa). Low complexity predominate over residues 386–395; it reads SSGHAASGKH. Lys491 is covalently cross-linked (Glycyl lysine isopeptide (Lys-Gly) (interchain with G-Cter in SUMO2)). In terms of domain architecture, MYST-type HAT spans 533-807; sequence DCGRYPSVIE…LDPESLRWTP (275 aa). Positions 536-826 are catalytic; the sequence is RYPSVIEFGK…EEEREAEKEA (291 aa). The segment at 566–591 adopts a C2HC MYST-type zinc-finger fold; it reads LYLCEFCLKYMKSKNILLRHSKKCGW. The segment at 570–826 is interaction with BRPF1; the sequence is EFCLKYMKSK…EEEREAEKEA (257 aa). Position 633 is an N6-acetyllysine; by autocatalysis (Lys633). Residues 674-678 and 683-689 each bind acetyl-CoA; these read SCIMI and QRQGFGR. Residue Glu709 is the Proton donor/acceptor of the active site. Ser713 contacts acetyl-CoA. Residues 846–860 show a composition bias toward low complexity; sequence SRVSSRQSSAKVQSK. 4 disordered regions span residues 846-1018, 1031-1252, 1283-1358, and 1388-1418; these read SRVS…NHFF, DAEH…FKDA, MSCN…DDTF, and DECQ…SPSV. An N6-acetyllysine mark is found at Lys856, Lys860, and Lys862. Ser866 bears the Phosphoserine mark. Acidic residues predominate over residues 887 to 909; sequence SEEEEEEEEEDDEEEEEEEEEES. Positions 910-924 are enriched in polar residues; the sequence is IQTSPPRLTKPQSVS. Over residues 925–944 the composition is skewed to basic residues; it reads IKRKRPFVVKKKRGRKRRRI. The segment covering 946–959 has biased composition (low complexity); the sequence is SSVTTETISETTEV. The span at 991-1004 shows a compositional bias: basic residues; it reads PVLRKAFPHQPGKK. Composition is skewed to basic and acidic residues over residues 1031–1047 and 1094–1114; these read DAEH…EPLK and EEQK…REVT. Residues 1155–1176 are compositionally biased toward acidic residues; the sequence is EEGEEEGEEEGEREEQEEEEEV. A compositionally biased stretch (basic and acidic residues) spans 1177 to 1207; the sequence is TTEKDLDGAKSKENPEPEISMEKEDPVHLGD. Acidic residues predominate over residues 1208 to 1217; sequence HEEDEDEEEE. 2 stretches are compositionally biased toward basic and acidic residues: residues 1238–1252 and 1310–1320; these read NMER…FKDA and QTQKQDQKNSD. Residues 1339-1349 are compositionally biased toward polar residues; that stretch reads ETAQAVQSLTQ. Residues 1359–1872 are interaction with RUNX1 and RUNX2; it reads PDCAETQEAC…QSLNGSYMRR (514 aa). Low complexity predominate over residues 1393 to 1410; that stretch reads SDHSSPVSSVHSHPGQSV.

Belongs to the MYST (SAS/MOZ) family. In terms of assembly, component of the MOZ/MORF complex composed at least of ING5, KAT6A, KAT6B, MEAF6 and one of BRPF1, BRD1/BRPF2 and BRPF3. Interacts with RUNX1 and RUNX2. Post-translationally, autoacetylation at Lys-633 is required for proper function. As to expression, ubiquitously expressed.

The protein resides in the nucleus. It catalyses the reaction L-lysyl-[protein] + acetyl-CoA = N(6)-acetyl-L-lysyl-[protein] + CoA + H(+). In terms of biological role, histone acetyltransferase which may be involved in both positive and negative regulation of transcription. Required for RUNX2-dependent transcriptional activation. Component of the MOZ/MORF complex which has a histone H3 acetyltransferase activity. Involved in cerebral cortex development. This is Histone acetyltransferase KAT6B (Kat6b) from Mus musculus (Mouse).